The sequence spans 234 residues: Mannose/glucose-specific lectin Cramoll (234 aa).

Residues glutamate 8 and aspartate 10 each contribute to the Mn(2+) site. Aspartate 10, tyrosine 12, asparagine 14, and aspartate 19 together coordinate Ca(2+). Tyrosine 12 lines the a carbohydrate pocket. Positions 19, 24, and 34 each coordinate Mn(2+). 99–100 is an a carbohydrate binding site; it reads LY. Aspartate 205 lines the Ca(2+) pocket. Arginine 225 is a binding site for a carbohydrate.

Belongs to the leguminous lectin family. Homotetramer. The alpha and beta chains are produced by partial proteolytic processing of the lectin precursor by an asparaginyl endopeptidase.

Its function is as follows. Glucose/D-mannose specific lectin. The polypeptide is Mannose/glucose-specific lectin Cramoll (Cratylia mollis (Camaratu bean)).